Consider the following 170-residue polypeptide: Lipoprotein signal peptidase (170 aa).

A run of 5 helical transmembrane segments spans residues 13-33, 72-92, 96-113, 116-136, and 142-162; these read IFISILVFFDQWSKYLVVTYV, LFFLIIPIIILVFVFSFSLKE, VSRFALILILSGGIGNII, LFRPLGVVDFLDVKFFGIFGL, and FNFADSYVVVGMIVFIIYDLF. Residues aspartate 124 and aspartate 146 contribute to the active site.

Belongs to the peptidase A8 family.

It localises to the cell inner membrane. It catalyses the reaction Release of signal peptides from bacterial membrane prolipoproteins. Hydrolyzes -Xaa-Yaa-Zaa-|-(S,diacylglyceryl)Cys-, in which Xaa is hydrophobic (preferably Leu), and Yaa (Ala or Ser) and Zaa (Gly or Ala) have small, neutral side chains.. It functions in the pathway protein modification; lipoprotein biosynthesis (signal peptide cleavage). In terms of biological role, this protein specifically catalyzes the removal of signal peptides from prolipoproteins. This is Lipoprotein signal peptidase from Borrelia duttonii (strain Ly).